We begin with the raw amino-acid sequence, 609 residues long: Nuclear factor 7, brain (609 aa).

Positions 21-75 constitute a Tudor-knot domain; that stretch reads NVGSTYPCKRSDGSQHDAEIVKVRYNKQAGREEYYAHYVGLNRRQNEWVDKSRLV. The segment covering 74–84 has biased composition (basic and acidic residues); the sequence is LVLTKPPKEGE. Residues 74 to 129 form a disordered region; the sequence is LVLTKPPKEGETNGTDQEVTDTAEQPDSKTPQKRKIEEPEPEPKKAKVEEKDASKN. Over residues 85 to 102 the composition is skewed to polar residues; it reads TNGTDQEVTDTAEQPDSK. Thr-103 is subject to Phosphothreonine; by CDK1. Residues 107 to 127 show a composition bias toward basic and acidic residues; sequence RKIEEPEPEPKKAKVEEKDAS. The RING-type zinc finger occupies 145–185; that stretch reads CPLCVELFKDPVMVACGHNFCRSCIDKAWEGQSSFACPECR. A B box-type zinc finger spans residues 219–260; sequence RPLEKCSEHDERLKLYCKDDGTLSCVICRDSLKHASHNFLPI. Positions 224, 227, 246, and 252 each coordinate Zn(2+). Positions 278 to 371 form a coiled coil; sequence LEASLKVTEQ…SLAKERMEDT (94 aa). Positions 413-609 constitute a B30.2/SPRY domain; sequence GPIQYIMWKE…VDPLRFVHNK (197 aa).

In terms of assembly, monomer. Post-translationally, threonine (predominantly) and serine residues are phosphorylated during oocyte maturation, when CDK1 is active. At the neurula stage, high expression in dorsal embryo region including neural folds and somites. Also high expression in adult brain (CNS) and low expression in oocytes.

The protein localises to the nucleus. Functionally, transcription factor that determines dorsal-ventral body axis. The polypeptide is Nuclear factor 7, brain (Xenopus laevis (African clawed frog)).